A 360-amino-acid polypeptide reads, in one-letter code: MTTVLQRREQLNLWEQFCSWVTSTNNRLYVGWFGVLMIPTLLAATICFVIAFIAAPPVDIDGIREPVSGSLLYGNNIITGAVVPSSNAIGLHFYPIWEAASLDEWLYNGGPYQLIIFHFLIGVFCYMGREWELSYRLGMRPWICVAYSAPVAAATAVFLIYPIGQGSFSDGMPLGISGTFNFMLVFQAEHNILMHPFHQLGVAGVFGGALFSAMHGSLVTSSLIRETTETESANYGYKFGQEEETYNIVAAHGYFGRLIFQYASFNNSRALHFFLAAWPVIGIWFTALGISTMAFNLNGFNFNHSVVDAQGNVINTWADIINRANLGMEVMHERNAHNFPLDLASAESAPVAMIAPSING.

Helical transmembrane passes span 29 to 46 (YVGW…AATI), 118 to 133 (HFLI…EWEL), and 142 to 156 (WICV…AATA). His-118 contributes to the chlorophyll a binding site. Tyr-126 contributes to the pheophytin a binding site. The [CaMn4O5] cluster site is built by Asp-170 and Glu-189. A helical transmembrane segment spans residues 197 to 218 (FHQLGVAGVFGGALFSAMHGSL). Chlorophyll a is bound at residue His-198. A quinone-binding positions include His-215 and 264–265 (SF). Fe cation is bound at residue His-215. A Fe cation-binding site is contributed by His-272. A helical transmembrane segment spans residues 274–288 (FLAAWPVIGIWFTAL). [CaMn4O5] cluster contacts are provided by His-332, Glu-333, Asp-342, and Ala-344. Residues 345-360 (SAESAPVAMIAPSING) constitute a propeptide that is removed on maturation.

Belongs to the reaction center PufL/M/PsbA/D family. As to quaternary structure, PSII is composed of 1 copy each of membrane proteins PsbA, PsbB, PsbC, PsbD, PsbE, PsbF, PsbH, PsbI, PsbJ, PsbK, PsbL, PsbM, PsbT, PsbX, PsbY, PsbZ, Psb30/Ycf12, peripheral proteins PsbO, CyanoQ (PsbQ), PsbU, PsbV and a large number of cofactors. It forms dimeric complexes. Precursor protein interacts with Ycf48. The D1/D2 heterodimer binds P680, chlorophylls that are the primary electron donor of PSII, and subsequent electron acceptors. It shares a non-heme iron and each subunit binds pheophytin, quinone, additional chlorophylls, carotenoids and lipids. D1 provides most of the ligands for the Mn4-Ca-O5 cluster of the oxygen-evolving complex (OEC). There is also a Cl(-1) ion associated with D1 and D2, which is required for oxygen evolution. The PSII complex binds additional chlorophylls, carotenoids and specific lipids. is required as a cofactor. In terms of processing, C-terminally processed by CtpA; processing is essential to allow assembly of the oxygen-evolving complex and thus photosynthetic growth. Tyr-161 forms a radical intermediate that is referred to as redox-active TyrZ, YZ or Y-Z.

Its subcellular location is the cellular thylakoid membrane. The enzyme catalyses 2 a plastoquinone + 4 hnu + 2 H2O = 2 a plastoquinol + O2. Functionally, photosystem II (PSII) is a light-driven water:plastoquinone oxidoreductase that uses light energy to abstract electrons from H(2)O, generating O(2) and a proton gradient subsequently used for ATP formation. It consists of a core antenna complex that captures photons, and an electron transfer chain that converts photonic excitation into a charge separation. The D1/D2 (PsbA/PsbD) reaction center heterodimer binds P680, the primary electron donor of PSII as well as several subsequent electron acceptors. The sequence is that of Photosystem II protein D1 3 from Thermosynechococcus vestitus (strain NIES-2133 / IAM M-273 / BP-1).